The primary structure comprises 82 residues: Small ribosomal subunit protein uS17 (82 aa).

It belongs to the universal ribosomal protein uS17 family. Part of the 30S ribosomal subunit.

Its function is as follows. One of the primary rRNA binding proteins, it binds specifically to the 5'-end of 16S ribosomal RNA. The chain is Small ribosomal subunit protein uS17 from Pelobacter propionicus (strain DSM 2379 / NBRC 103807 / OttBd1).